The following is a 381-amino-acid chain: Beta-lactamase (381 aa).

An N-terminal signal peptide occupies residues 1–20 (MMKKSICCALLLTASFSTFA). Serine 84 functions as the Acyl-ester intermediate in the catalytic mechanism. Residue tyrosine 170 is the Proton acceptor of the active site. 335–337 (KTG) serves as a coordination point for substrate.

Belongs to the class-C beta-lactamase family.

The protein localises to the periplasm. The catalysed reaction is a beta-lactam + H2O = a substituted beta-amino acid. Its activity is regulated as follows. Sulbactam is an effective progressive inhibitor but a poor competitive inhibitor. Functionally, this protein is a serine beta-lactamase with a substrate specificity for cephalosporins. The polypeptide is Beta-lactamase (ampC) (Citrobacter freundii).